We begin with the raw amino-acid sequence, 253 residues long: MITKRIIPCLDVDMGRVVKGVNFVNLKDVGDPVEIAEFYNKEGADEIVFLDISATHEGRATMIDVVRKTAEKLFIPLTVGGGIKNINDFRDILRAGADKISVNSSAIRNPKLIKKAAECFGSQCVVVAIDGKKRKDKDGWNVFINGGRIDTGIDAIEWARKVEKLGAGEILLTSMDADGTKEGYDLEFTNEVSKAVNIPVIASGGCGKLKHFGEIFEKSSADAALAASLFHFKELSIKEVKNYLKKEGFSVRL.

Active-site residues include aspartate 11 and aspartate 130.

This sequence belongs to the HisA/HisF family. As to quaternary structure, heterodimer of HisH and HisF.

The protein localises to the cytoplasm. The enzyme catalyses 5-[(5-phospho-1-deoxy-D-ribulos-1-ylimino)methylamino]-1-(5-phospho-beta-D-ribosyl)imidazole-4-carboxamide + L-glutamine = D-erythro-1-(imidazol-4-yl)glycerol 3-phosphate + 5-amino-1-(5-phospho-beta-D-ribosyl)imidazole-4-carboxamide + L-glutamate + H(+). It functions in the pathway amino-acid biosynthesis; L-histidine biosynthesis; L-histidine from 5-phospho-alpha-D-ribose 1-diphosphate: step 5/9. IGPS catalyzes the conversion of PRFAR and glutamine to IGP, AICAR and glutamate. The HisF subunit catalyzes the cyclization activity that produces IGP and AICAR from PRFAR using the ammonia provided by the HisH subunit. This is Imidazole glycerol phosphate synthase subunit HisF from Clostridium botulinum (strain Kyoto / Type A2).